Here is a 415-residue protein sequence, read N- to C-terminus: MSAPSESSETAAPLLSDLSPEEQKGVQQVREIYRALLDSFKFKNEYNAYDPLNNTIITQHGSYEVPEAFAQCTYLAQIYVSYKINSLPYQTYIKDLEWISPAEVYKLIMERLQKNKYFLRKQVQAMEKIKVLLCPSPELLENNYVDDNLKISSHKVTQRHPEKVYDLMTYQEIADGIDDFFSLLEMPNLSLAFVNKTSIKLNISCSGANNHIGSFIGRTARTIRHYWIKNAILEFADYKKKTVPYPFVGPPRDPGLFEHIVDDCSTGAPINWDDFSIDSYASYVTVMEHLEEVVELTDRHRRVIEYLGMYIASDLHEEGKLTRARKLDRTTLFHTVRDVLLHDGSYTRHKGVRCLDNGSVRVSIRLKHRQLTATWIELEPIIENGEVKDVMFKLSTRVQYTEENENETRPESSSE.

In terms of biological role, plasmid partition require REP1, REP2, and a cis-acting DNA sequence (known as STB). REP1 may act by intercalating in the yeast nuclear matrix and binding STB either directly or via REP2. The polypeptide is Trans-acting factor B (B) (Kluyveromyces lactis (Yeast)).